A 577-amino-acid polypeptide reads, in one-letter code: Arginine--tRNA ligase (577 aa).

The 'HIGH' region motif lies at 122–132; that stretch reads PNVAKEMHVGH.

Belongs to the class-I aminoacyl-tRNA synthetase family. In terms of assembly, monomer.

Its subcellular location is the cytoplasm. The catalysed reaction is tRNA(Arg) + L-arginine + ATP = L-arginyl-tRNA(Arg) + AMP + diphosphate. The polypeptide is Arginine--tRNA ligase (Escherichia coli (strain ATCC 8739 / DSM 1576 / NBRC 3972 / NCIMB 8545 / WDCM 00012 / Crooks)).